A 435-amino-acid polypeptide reads, in one-letter code: Probable exopolygalacturonase B (435 aa).

Residues 1–15 (MKFFTAALFASAVSA) form the signal peptide. Residues N59, N184, and N224 are each glycosylated (N-linked (GlcNAc...) asparagine). D254 serves as the catalytic Proton donor. C256 and C273 are oxidised to a cystine. N-linked (GlcNAc...) asparagine glycans are attached at residues N262 and N274. The active site involves H277. 4 N-linked (GlcNAc...) asparagine glycosylation sites follow: N301, N328, N365, and N368. C391 and C397 are oxidised to a cystine.

Belongs to the glycosyl hydrolase 28 family.

It is found in the secreted. It carries out the reaction [(1-&gt;4)-alpha-D-galacturonosyl](n) + H2O = alpha-D-galacturonate + [(1-&gt;4)-alpha-D-galacturonosyl](n-1). In terms of biological role, specific in hydrolyzing the terminal glycosidic bond of polygalacturonic acid and oligogalacturonates. In Aspergillus terreus (strain NIH 2624 / FGSC A1156), this protein is Probable exopolygalacturonase B (pgxB).